Consider the following 91-residue polypeptide: Acylphosphatase (91 aa).

The Acylphosphatase-like domain occupies C5–R91. Catalysis depends on residues R20 and N38.

The protein belongs to the acylphosphatase family.

It catalyses the reaction an acyl phosphate + H2O = a carboxylate + phosphate + H(+). The sequence is that of Acylphosphatase (acyP) from Pseudomonas paraeruginosa (strain DSM 24068 / PA7) (Pseudomonas aeruginosa (strain PA7)).